The chain runs to 151 residues: Deoxyuridine 5'-triphosphate nucleotidohydrolase (151 aa).

Residues 70–72 (RSG), N83, 87–89 (LID), and M97 contribute to the substrate site.

The protein belongs to the dUTPase family. The cofactor is Mg(2+).

It catalyses the reaction dUTP + H2O = dUMP + diphosphate + H(+). The protein operates within pyrimidine metabolism; dUMP biosynthesis; dUMP from dCTP (dUTP route): step 2/2. In terms of biological role, this enzyme is involved in nucleotide metabolism: it produces dUMP, the immediate precursor of thymidine nucleotides and it decreases the intracellular concentration of dUTP so that uracil cannot be incorporated into DNA. In Actinobacillus succinogenes (strain ATCC 55618 / DSM 22257 / CCUG 43843 / 130Z), this protein is Deoxyuridine 5'-triphosphate nucleotidohydrolase.